A 253-amino-acid polypeptide reads, in one-letter code: uncharacterized protein (253 aa).

Positions 200-209 are enriched in basic and acidic residues; that stretch reads TGREHAHKGP. Disordered stretches follow at residues 200–225 and 234–253; these read TGREHAHKGPELTTPDSGLPRPPNPA and QHSPPLGTSTPSAVLLSAAT.

In terms of tissue distribution, most abundantly expressed in gastrointestinal tissues. Expressed at lower levels in kidney and placenta. Expressed in fetal brain, liver, placenta, kidney and lung.

This is an uncharacterized protein from Homo sapiens (Human).